The following is a 642-amino-acid chain: MGKIIGIDLGTTNSCVAVLENGQPKVIENSEGARTTPSVVAYMEDGEILVGAPAKRQAVTNAKNTIFASKRLIGRRFEEKEVQKDIDLMPFSIVKADNGDAWIDVRGKKLAPPQISAEVLRKMKKTAEDYLGEEVTEAVITVPAYFNDSQRQATKDAGRIAGLEVKRIINEPTAAALAFGMDKSEKGDKKIAVYDLGGGTFDISIIEIADVDGEKQFEVLATNGDTFLGGEDFDQRLIDYIVTEFKKEQGVDLKNDVMALQRLKEAAEKAKIELSSGQQTEINLPYITMDATGPKHLTMKITRAKFESLVDELIERSIEPCRVAIKDAGLKVSDIDDVILVGGQSRMPKVQEAVKTFFGKEPRRDVNPDEAVAVGAAIQGSVLSGERKDLLLLDVTPLSLGIETMGGIMTKLIQKNTTIPTKATQVFSTADDNQTAVTIHVLQGEREKAAANKSLGQFNLSDIPPAPRGLPQIEVTFDIDANGILHVSAKDKATGKQANITIQASSGLSEAEIEKMVRDAELNAEEDKKLAELVQARNQAEGLIHSVKKSLADYGDKIGSDEKARIEAAIKDAEEAVKGEDKAAIEAKSEELAKASQKLGEIMYAQAQAESQAAGEGQPDAGKKDDGNVVDAEFEEVKKDKQ.

A Phosphothreonine; by autocatalysis modification is found at Thr200. Positions 608 to 618 (QAESQAAGEGQ) are enriched in low complexity. Residues 608–642 (QAESQAAGEGQPDAGKKDDGNVVDAEFEEVKKDKQ) form a disordered region.

Belongs to the heat shock protein 70 family.

Acts as a chaperone. The protein is Chaperone protein DnaK of Laribacter hongkongensis (strain HLHK9).